The sequence spans 154 residues: Large ribosomal subunit protein uL13 (154 aa).

Belongs to the universal ribosomal protein uL13 family. In terms of assembly, part of the 50S ribosomal subunit.

Its function is as follows. This protein is one of the early assembly proteins of the 50S ribosomal subunit, although it is not seen to bind rRNA by itself. It is important during the early stages of 50S assembly. This Rhodospirillum centenum (strain ATCC 51521 / SW) protein is Large ribosomal subunit protein uL13.